The sequence spans 425 residues: Tyrosine--tRNA ligase (425 aa).

Residue Tyr37 participates in L-tyrosine binding. The short motif at 42-51 is the 'HIGH' region element; it reads PTADSLHLGH. The L-tyrosine site is built by Tyr174 and Gln178. The 'KMSKS' region motif lies at 234-238; the sequence is KFGKS. Residue Lys237 coordinates ATP. The S4 RNA-binding domain maps to 357 to 422; sequence DGLIDALAAS…RGKKLYALLV (66 aa).

This sequence belongs to the class-I aminoacyl-tRNA synthetase family. TyrS type 1 subfamily. Homodimer.

It localises to the cytoplasm. It catalyses the reaction tRNA(Tyr) + L-tyrosine + ATP = L-tyrosyl-tRNA(Tyr) + AMP + diphosphate + H(+). Functionally, catalyzes the attachment of tyrosine to tRNA(Tyr) in a two-step reaction: tyrosine is first activated by ATP to form Tyr-AMP and then transferred to the acceptor end of tRNA(Tyr). This Laribacter hongkongensis (strain HLHK9) protein is Tyrosine--tRNA ligase.